Here is a 307-residue protein sequence, read N- to C-terminus: Retron Ec86 putative ribosyltransferase/DNA-binding protein (307 aa).

Functionally, possible ribosyltransferase/DNA-binding component of antiviral defense system retron Ec86, composed of a non-coding RNA (ncRNA), a ribosyltransferase/DNA-binding protein and a reverse transcriptase (RT). Expression of the 3-gene retron confers protection against bacteriophages T5. At multiplicity of infection (MOI) of 0.02 cultures grow normally when infected with T5 without collapsing, at MOI 2 cultures enter growth stasis. The protein is Retron Ec86 putative ribosyltransferase/DNA-binding protein of Escherichia coli.